A 159-amino-acid chain; its full sequence is NADH-quinone oxidoreductase subunit B (159 aa).

Cys-32, Cys-33, Cys-97, and Cys-126 together coordinate [4Fe-4S] cluster.

Belongs to the complex I 20 kDa subunit family. NDH-1 is composed of 14 different subunits. Subunits NuoB, C, D, E, F, and G constitute the peripheral sector of the complex. [4Fe-4S] cluster is required as a cofactor.

The protein localises to the cell inner membrane. The catalysed reaction is a quinone + NADH + 5 H(+)(in) = a quinol + NAD(+) + 4 H(+)(out). In terms of biological role, NDH-1 shuttles electrons from NADH, via FMN and iron-sulfur (Fe-S) centers, to quinones in the respiratory chain. The immediate electron acceptor for the enzyme in this species is believed to be ubiquinone. Couples the redox reaction to proton translocation (for every two electrons transferred, four hydrogen ions are translocated across the cytoplasmic membrane), and thus conserves the redox energy in a proton gradient. The chain is NADH-quinone oxidoreductase subunit B from Helicobacter pylori (strain P12).